A 118-amino-acid chain; its full sequence is Large ribosomal subunit protein uL18 (118 aa).

Belongs to the universal ribosomal protein uL18 family. Part of the 50S ribosomal subunit; part of the 5S rRNA/L5/L18/L25 subcomplex. Contacts the 5S and 23S rRNAs.

Its function is as follows. This is one of the proteins that bind and probably mediate the attachment of the 5S RNA into the large ribosomal subunit, where it forms part of the central protuberance. The protein is Large ribosomal subunit protein uL18 of Rickettsia akari (strain Hartford).